The sequence spans 1460 residues: MAEEQQQPPPQQPDAHQQLPPSAPNSGVALPALVPGLPGTEASALQHKIKNSICKTVQSKVDCILQEVEKFTDLEKLYLYLQLPSGLSNGEKSDQNAMSSSRAQQMHAFSWIRNTLEEHPETSLPKQEVYDEYKSYCDNLGYHPLSAADFGKIMKNVFPNMKARRLGTRGKSKYCYSGLRKKAFVHMPTLPNLDFHKTGDGLEGAEPSGQLQNIDEEVISSACRLVCEWAQKVLSQPFDTVLELARFLVKSHYIGTKSMAALTVMAAAPAGMKGITQPSAFIPTAESNSFQPQVKTLPSPIDAKQQLQRKIQKKQQEQKLQSPLPGESAAKKSESATSNGVTNLPNGNPSILSPQPIGIVVAAVPSPIPVQRTRQLVTSPSPMSSSDGKVLPLNVQVVTQHMQSVKQAPKTPQNVPASPGGDRSARHRYPQILPKPANTSALTIRSPTTVLFTSSPIKTAVVPASHMSSLNVVKMTTISLTPSNSNTPLKHSASVSSATGTTEESRSVPQIKNGSVVSLQSPGSRSSSAGGTSAVEVKVEPETSSDEHPVQCQENSDEAKAPQTPSALLGQKSNTDGALQKPSNEGVIEIKATKVCDQRTKCKSRCNEMLPGTSTGNNQSTITLSVASQNLTFTSSSSPPNGDSINKDPKLCTKSPRKRLSSTLQETQVPPVKKPIVEQLSAATIEGQKQGSVKKDQKVPHSGKTEGSTAGAQIPSKVSVNVSSHIGANQPLNSSALVISDSALEQQTTPSSSPDIKVKLEGSVFLLDSDSKSVGSFNPNGWQQITKDSEFISASCEQQQDISVMTIPEHSDINDLEKSVWELEGMPQDTYSQQLHSQIQESSLNQIQAHSSDQLPLQSELKEFEPSVSQTNESYFPFDDELTQDSIVEELVLMEQQMSMNNSHSYGNCLGMTLQSQSVTPGAPMSSHTSSTHFYHPIHSNGTPIHTPTPTPTPTPTPTPTPTPTSEMIAGSQSLSRESPCSRLAQTTPVDSALGSSRHTPIGTPHSNCSSSVPPSPVECRNPFAFTPISSSMAYHDASIVSSSPVKPMQRPMATHPDKTKLEWMNNGYSGVGNSSVSGHGILPSYQELVEDRFRKPHAFAVPGQSYQSQSRHHDTHFGRLTPVSPVQHQGATVNNTNKQEGFAVPAPLDNKGTNSSASSNFRCRSVSPAVHRQRNLSGSTLYPVSNIPRSNVTPFGSPVTPEVHVFTNVHTDACANNIAQRSQSVPLTVMMQTAFPNALQKQANSKKITNVLLSKLDSDNDDAVRGLGMNNLPSNYTARMNLTQILEPSTVFPSANPQNMIDSSTSVYEFQTPSYLTKSNSTGQINFSPGDNQAQSEIGEQQLDFNSTVKDLLSGDSLQTNQQLVGQGASDLTNTASDFSSDIRLSSELSGSINDLNTLDPNLLFDPGRQQGQDDEATLEELKNDPLFQQICSESMNSMTSSGFEWIESKDHPTVEMLG.

Positions 1-34 (MAEEQQQPPPQQPDAHQQLPPSAPNSGVALPALV) are disordered. The RFX-type winged-helix DNA-binding region spans 108–183 (AFSWIRNTLE…YCYSGLRKKA (76 aa)). The PxLPxI/L motif; mediates interaction with ANKRA2 and RFXANK motif lies at 188 to 193 (PTLPNL). The segment at 308 to 352 (QRKIQKKQQEQKLQSPLPGESAAKKSESATSNGVTNLPNGNPSIL) is disordered. Ser-322 bears the Phosphoserine mark. The span at 337–352 (TSNGVTNLPNGNPSIL) shows a compositional bias: polar residues. At Ser-379 the chain carries Phosphoserine. Over residues 404-416 (SVKQAPKTPQNVP) the composition is skewed to polar residues. Positions 404–428 (SVKQAPKTPQNVPASPGGDRSARHR) are disordered. A phosphoserine mark is found at Ser-418 and Ser-455. Over residues 481–513 (TPSNSNTPLKHSASVSSATGTTEESRSVPQIKN) the composition is skewed to polar residues. 3 disordered regions span residues 481–585 (TPSN…PSNE), 632–715 (TFTS…AQIP), and 917–1015 (QSVT…SVPP). Positions 515–535 (SVVSLQSPGSRSSSAGGTSAV) are enriched in low complexity. Basic and acidic residues predominate over residues 537–549 (VKVEPETSSDEHP). Composition is skewed to polar residues over residues 563 to 583 (QTPSALLGQKSNTDGALQKPS) and 632 to 644 (TFTSSSSPPNGDS). Thr-564 is subject to Phosphothreonine. At Ser-662 the chain carries Phosphoserine. Lys-704 carries the post-translational modification N6-acetyllysine. Polar residues-rich tracts occupy residues 705-715 (TEGSTAGAQIP) and 917-933 (QSVTPGAPMSSHTSSTH). Residues 947–963 (TPTPTPTPTPTPTPTPT) show a composition bias toward pro residues. The span at 971–1009 (GSQSLSRESPCSRLAQTTPVDSALGSSRHTPIGTPHSNC) shows a compositional bias: polar residues. Thr-988 carries the phosphothreonine modification. Residues Ser-1178 and Ser-1329 each carry the phosphoserine modification.

This sequence belongs to the RFX family. As to quaternary structure, interacts (via PxLPxI/L motif) with RFXANK (via ankyrin repeats). Interacts (via PxLPxI/L motif) with ANKRA2 (via ankyrin repeats). In terms of tissue distribution, widely expressed in many different tissue types including thymus and placenta, with high expression in brain. Expressed in both inhibitory and excitatory neurons in cortex.

Its subcellular location is the nucleus. In terms of biological role, transcription factor. Acts as a transcriptional activator by binding to promoter regions of target genes, such as PDCD4, PIK3IP1, MXD4, PNRC1, and RFX5. Plays a role in natural killer (NK) cell maintenance and immunity. May play a role in the process of ciliogenesis in the neural tube and neural tube closure. The chain is DNA-binding protein RFX7 from Homo sapiens (Human).